The sequence spans 184 residues: NEDD8-conjugating enzyme UBC12 (184 aa).

The tract at residues 10–29 (EKQRQAAQAQAPAQGRSAAS) is disordered. The span at 14-29 (QAAQAQAPAQGRSAAS) shows a compositional bias: low complexity. Positions 30–174 (PAQLRVEKDL…VQATMMGGHL (145 aa)) constitute a UBC core domain. Cys-112 functions as the Glycyl thioester intermediate in the catalytic mechanism.

The protein belongs to the ubiquitin-conjugating enzyme family. UBC12 subfamily.

The enzyme catalyses [E1 NEDD8-activating enzyme]-S-[NEDD8 protein]-yl-L-cysteine + [E2 NEDD8-conjugating enzyme]-L-cysteine = [E1 NEDD8-activating enzyme]-L-cysteine + [E2 NEDD8-conjugating enzyme]-S-[NEDD8-protein]-yl-L-cysteine.. The protein operates within protein modification; protein neddylation. Its function is as follows. Accepts the ubiquitin-like protein NEDD8/RUB1 from the UBA3-ULA1 E1 complex and catalyzes its covalent attachment to other proteins. This chain is NEDD8-conjugating enzyme UBC12 (UBC12), found in Eremothecium gossypii (strain ATCC 10895 / CBS 109.51 / FGSC 9923 / NRRL Y-1056) (Yeast).